Reading from the N-terminus, the 140-residue chain is uncharacterized protein (140 aa).

This is an uncharacterized protein from Caenorhabditis elegans.